We begin with the raw amino-acid sequence, 453 residues long: Ribosome biogenesis protein YTM1 (453 aa).

Residues 8–89 (VKLRFFTREQ…ETFLNVEYTR (82 aa)) are ubiquitin-like (UBL) domain. A sufficient for interaction with ERB1 and association with 66S pre-ribosomes region spans residues 99–453 (SFSNEDWVSS…INKGDNIFKS (355 aa)). WD repeat units follow at residues 101–139 (SNEDWVSSLDVGDNNKIISGSYDGVVRTWNLSGKIEKQY), 141–179 (GHSAPIRAVKYISNTRMVSGGNDRTLRLWKTKNEDLKQP), 199–237 (GHKAPVVSIDVSDNSRILSGSYDNTIGFWSTIYKEMTVV), 278–318 (SHTG…CIDT), 320–359 (TTSYSLLSLAQLPTLNLLACGSSARHITLHDPRIGSTSKI), 366–406 (GHKN…PMYT), and 417–453 (GVNDKVFAVNWSKNVGIISAGQDKKIQINKGDNIFKS).

This sequence belongs to the WD repeat WDR12/YTM1 family. In terms of assembly, component of the NOP7 complex, composed of ERB1, NOP7 and YTM1. The complex is held together by ERB1, which interacts with NOP7 via its N-terminal domain and with YTM1 via a high-affinity interaction between the seven-bladed beta-propeller domains of the 2 proteins. The NOP7 complex associates with the 66S pre-ribosome. Interacts (via UBL domain) with MDN1 (via VWFA/MIDAS domain).

The protein localises to the nucleus. The protein resides in the nucleolus. It is found in the nucleoplasm. Component of the NOP7 complex, which is required for maturation of the 25S and 5.8S ribosomal RNAs and formation of the 60S ribosome. In Vanderwaltozyma polyspora (strain ATCC 22028 / DSM 70294 / BCRC 21397 / CBS 2163 / NBRC 10782 / NRRL Y-8283 / UCD 57-17) (Kluyveromyces polysporus), this protein is Ribosome biogenesis protein YTM1.